A 139-amino-acid polypeptide reads, in one-letter code: Hydrogenase maturation factor HypA (139 aa).

His2 is a binding site for Ni(2+). Positions 73, 76, 110, and 113 each coordinate Zn(2+).

It belongs to the HypA/HybF family.

In terms of biological role, involved in the maturation of [NiFe] hydrogenases. Required for nickel insertion into the metal center of the hydrogenase. The chain is Hydrogenase maturation factor HypA from Pyrococcus furiosus (strain ATCC 43587 / DSM 3638 / JCM 8422 / Vc1).